A 247-amino-acid polypeptide reads, in one-letter code: Ice-binding protein (247 aa).

The signal sequence occupies residues 1-19 (MTFSILSIFVFGLISSSVA). Asparagine 219 is a glycosylation site (N-linked (GlcNAc...) asparagine).

This sequence belongs to the ice-binding protein family.

The protein localises to the secreted. In terms of biological role, binds ice crystals and most probably inhibits their growth in order to prevent cell damage from extracellular ice. The sequence is that of Ice-binding protein from Flammulina populicola (Enokitake mushroom).